We begin with the raw amino-acid sequence, 213 residues long: Ras-related protein Rab-4B (213 aa).

At alanine 2 the chain carries N-acetylalanine. Glycine 18, threonine 19, glycine 20, lysine 21, serine 22, and cysteine 23 together coordinate GDP. Residues glycine 18, threonine 19, glycine 20, lysine 21, serine 22, cysteine 23, serine 37, histidine 39, and threonine 40 each contribute to the GTP site. A Mg(2+)-binding site is contributed by serine 22. The Switch 1 signature appears at 39–44 (HTIGVE). Mg(2+) is bound by residues threonine 40 and aspartate 63. Positions 65–74 (AGQERFRSVT) match the Switch 2 motif. Glycine 66 is a GTP binding site. Glutamine 67 is subject to 5-glutamyl serotonin. GDP-binding residues include asparagine 121, lysine 122, aspartate 124, alanine 152, and leucine 153. Residues asparagine 121, lysine 122, aspartate 124, alanine 152, and leucine 153 each coordinate GTP. Residues serine 185 and serine 193 each carry the phosphoserine modification. Residues cysteine 211 and cysteine 213 are each lipidated (S-geranylgeranyl cysteine). Cysteine 213 bears the Cysteine methyl ester mark.

Belongs to the small GTPase superfamily. Rab family. In terms of assembly, interacts (GTP-bound form) with RUFY1; the interaction allows endosomal tethering and fusion. It depends on Mg(2+) as a cofactor. Serotonylation of Gln-67 by TGM2 during activation and aggregation of platelets leads to constitutive activation of GTPase activity.

The protein localises to the cell membrane. It is found in the early endosome membrane. The enzyme catalyses GTP + H2O = GDP + phosphate + H(+). Regulated by guanine nucleotide exchange factors (GEFs) which promote the exchange of bound GDP for free GTP. Regulated by GTPase activating proteins (GAPs) which increase the GTP hydrolysis activity. Inhibited by GDP dissociation inhibitors (GDIs). The small GTPases Rab are key regulators of intracellular membrane trafficking, from the formation of transport vesicles to their fusion with membranes. Rabs cycle between an inactive GDP-bound form and an active GTP-bound form that is able to recruit to membranes different set of downstream effectors directly responsible for vesicle formation, movement, tethering and fusion. RAB4B mediates endosomal tethering and fusion through the interaction with RUFY1 and RAB14. Acts as a regulator of platelet alpha-granule release during activation and aggregation of platelets. The chain is Ras-related protein Rab-4B from Homo sapiens (Human).